The chain runs to 334 residues: UDP-N-acetylenolpyruvoylglucosamine reductase (334 aa).

The region spanning 16–186 (INVFAKKIII…LSVGIKLPKT (171 aa)) is the FAD-binding PCMH-type domain. Arginine 162 is an active-site residue. The Proton donor role is filled by serine 232. Residue glutamate 329 is part of the active site.

It belongs to the MurB family. FAD is required as a cofactor.

It localises to the cytoplasm. It carries out the reaction UDP-N-acetyl-alpha-D-muramate + NADP(+) = UDP-N-acetyl-3-O-(1-carboxyvinyl)-alpha-D-glucosamine + NADPH + H(+). It functions in the pathway cell wall biogenesis; peptidoglycan biosynthesis. Cell wall formation. The polypeptide is UDP-N-acetylenolpyruvoylglucosamine reductase (Buchnera aphidicola subsp. Baizongia pistaciae (strain Bp)).